Consider the following 204-residue polypeptide: N-(5'-phosphoribosyl)anthranilate isomerase (204 aa).

The protein belongs to the TrpF family.

It catalyses the reaction N-(5-phospho-beta-D-ribosyl)anthranilate = 1-(2-carboxyphenylamino)-1-deoxy-D-ribulose 5-phosphate. It functions in the pathway amino-acid biosynthesis; L-tryptophan biosynthesis; L-tryptophan from chorismate: step 3/5. The chain is N-(5'-phosphoribosyl)anthranilate isomerase from Bacillus mycoides (strain KBAB4) (Bacillus weihenstephanensis).